Here is a 248-residue protein sequence, read N- to C-terminus: 2,3-bisphosphoglycerate-dependent phosphoglycerate mutase (248 aa).

Residues R8–N15, T21–G22, R60, E87–Y90, K98, R114–R115, and G183–N184 contribute to the substrate site. The active-site Tele-phosphohistidine intermediate is the H9. The active-site Proton donor/acceptor is the E87.

Belongs to the phosphoglycerate mutase family. BPG-dependent PGAM subfamily. Homodimer.

It carries out the reaction (2R)-2-phosphoglycerate = (2R)-3-phosphoglycerate. It participates in carbohydrate degradation; glycolysis; pyruvate from D-glyceraldehyde 3-phosphate: step 3/5. Catalyzes the interconversion of 2-phosphoglycerate and 3-phosphoglycerate. This is 2,3-bisphosphoglycerate-dependent phosphoglycerate mutase from Paraburkholderia phymatum (strain DSM 17167 / CIP 108236 / LMG 21445 / STM815) (Burkholderia phymatum).